We begin with the raw amino-acid sequence, 316 residues long: tRNA uridine(34) hydroxylase (316 aa).

Residues 136–230 (ADENTVVVDK…YLEEVPREQS (95 aa)) enclose the Rhodanese domain. The active-site Cysteine persulfide intermediate is cysteine 190.

The protein belongs to the TrhO family.

The enzyme catalyses uridine(34) in tRNA + AH2 + O2 = 5-hydroxyuridine(34) in tRNA + A + H2O. Functionally, catalyzes oxygen-dependent 5-hydroxyuridine (ho5U) modification at position 34 in tRNAs. The chain is tRNA uridine(34) hydroxylase from Brucella abortus (strain 2308).